We begin with the raw amino-acid sequence, 465 residues long: Argininosuccinate lyase (465 aa).

The protein belongs to the lyase 1 family. Argininosuccinate lyase subfamily.

The protein localises to the cytoplasm. It catalyses the reaction 2-(N(omega)-L-arginino)succinate = fumarate + L-arginine. It functions in the pathway amino-acid biosynthesis; L-arginine biosynthesis; L-arginine from L-ornithine and carbamoyl phosphate: step 3/3. In Nitrobacter winogradskyi (strain ATCC 25391 / DSM 10237 / CIP 104748 / NCIMB 11846 / Nb-255), this protein is Argininosuccinate lyase.